A 144-amino-acid chain; its full sequence is Large ribosomal subunit protein uL11 (144 aa).

This sequence belongs to the universal ribosomal protein uL11 family. In terms of assembly, part of the ribosomal stalk of the 50S ribosomal subunit. Interacts with L10 and the large rRNA to form the base of the stalk. L10 forms an elongated spine to which L12 dimers bind in a sequential fashion forming a multimeric L10(L12)X complex. One or more lysine residues are methylated.

Its function is as follows. Forms part of the ribosomal stalk which helps the ribosome interact with GTP-bound translation factors. This chain is Large ribosomal subunit protein uL11, found in Rhodococcus erythropolis (strain PR4 / NBRC 100887).